Here is a 270-residue protein sequence, read N- to C-terminus: Thiazole synthase (270 aa).

Catalysis depends on Lys112, which acts as the Schiff-base intermediate with DXP. 1-deoxy-D-xylulose 5-phosphate-binding positions include Gly173, 199–200 (AG), and 221–222 (NS).

This sequence belongs to the ThiG family. Homotetramer. Forms heterodimers with either ThiH or ThiS.

The protein localises to the cytoplasm. It carries out the reaction [ThiS sulfur-carrier protein]-C-terminal-Gly-aminoethanethioate + 2-iminoacetate + 1-deoxy-D-xylulose 5-phosphate = [ThiS sulfur-carrier protein]-C-terminal Gly-Gly + 2-[(2R,5Z)-2-carboxy-4-methylthiazol-5(2H)-ylidene]ethyl phosphate + 2 H2O + H(+). It participates in cofactor biosynthesis; thiamine diphosphate biosynthesis. Catalyzes the rearrangement of 1-deoxy-D-xylulose 5-phosphate (DXP) to produce the thiazole phosphate moiety of thiamine. Sulfur is provided by the thiocarboxylate moiety of the carrier protein ThiS. In vitro, sulfur can be provided by H(2)S. This Pseudomonas entomophila (strain L48) protein is Thiazole synthase.